Here is a 313-residue protein sequence, read N- to C-terminus: tRNA dimethylallyltransferase (313 aa).

17-24 (GPTASGKT) contacts ATP. Position 19–24 (19–24 (TASGKT)) interacts with substrate. 3 interaction with substrate tRNA regions span residues 42–45 (DSAL), 166–170 (QRLSR), and 247–252 (RCVGYR).

It belongs to the IPP transferase family. In terms of assembly, monomer. Mg(2+) is required as a cofactor.

It catalyses the reaction adenosine(37) in tRNA + dimethylallyl diphosphate = N(6)-dimethylallyladenosine(37) in tRNA + diphosphate. Functionally, catalyzes the transfer of a dimethylallyl group onto the adenine at position 37 in tRNAs that read codons beginning with uridine, leading to the formation of N6-(dimethylallyl)adenosine (i(6)A). In Yersinia pseudotuberculosis serotype O:1b (strain IP 31758), this protein is tRNA dimethylallyltransferase.